A 489-amino-acid chain; its full sequence is Glycogen synthase (489 aa).

Residue lysine 15 participates in ADP-alpha-D-glucose binding.

It belongs to the glycosyltransferase 1 family. Bacterial/plant glycogen synthase subfamily.

The catalysed reaction is [(1-&gt;4)-alpha-D-glucosyl](n) + ADP-alpha-D-glucose = [(1-&gt;4)-alpha-D-glucosyl](n+1) + ADP + H(+). It participates in glycan biosynthesis; glycogen biosynthesis. In terms of biological role, synthesizes alpha-1,4-glucan chains using ADP-glucose. The polypeptide is Glycogen synthase (Francisella tularensis subsp. mediasiatica (strain FSC147)).